The primary structure comprises 351 residues: Methylthioribose-1-phosphate isomerase (351 aa).

Substrate contacts are provided by residues 51–53 (RGA), Arg-94, and Gln-199. Asp-240 (proton donor) is an active-site residue. 250–251 (NK) provides a ligand contact to substrate.

It belongs to the EIF-2B alpha/beta/delta subunits family. MtnA subfamily. As to quaternary structure, homodimer.

The enzyme catalyses 5-(methylsulfanyl)-alpha-D-ribose 1-phosphate = 5-(methylsulfanyl)-D-ribulose 1-phosphate. It participates in amino-acid biosynthesis; L-methionine biosynthesis via salvage pathway; L-methionine from S-methyl-5-thio-alpha-D-ribose 1-phosphate: step 1/6. In terms of biological role, catalyzes the interconversion of methylthioribose-1-phosphate (MTR-1-P) into methylthioribulose-1-phosphate (MTRu-1-P). The chain is Methylthioribose-1-phosphate isomerase from Bacillus anthracis.